Here is a 540-residue protein sequence, read N- to C-terminus: 2-isopropylmalate synthase (540 aa).

The Pyruvate carboxyltransferase domain occupies Val8 to Ser271. Residues Asp17, His208, His210, and Asn244 each contribute to the Mn(2+) site. A regulatory domain region spans residues Gln408–Ile540.

It belongs to the alpha-IPM synthase/homocitrate synthase family. LeuA type 1 subfamily. In terms of assembly, homodimer. It depends on Mn(2+) as a cofactor.

The protein localises to the cytoplasm. It catalyses the reaction 3-methyl-2-oxobutanoate + acetyl-CoA + H2O = (2S)-2-isopropylmalate + CoA + H(+). It participates in amino-acid biosynthesis; L-leucine biosynthesis; L-leucine from 3-methyl-2-oxobutanoate: step 1/4. In terms of biological role, catalyzes the condensation of the acetyl group of acetyl-CoA with 3-methyl-2-oxobutanoate (2-ketoisovalerate) to form 3-carboxy-3-hydroxy-4-methylpentanoate (2-isopropylmalate). The protein is 2-isopropylmalate synthase of Prochlorococcus marinus (strain MIT 9303).